Consider the following 425-residue polypeptide: Glutamyl-tRNA reductase (425 aa).

Residues threonine 49 to arginine 52, serine 107, glutamate 112 to glutamine 114, and glutamine 118 each bind substrate. The active-site Nucleophile is the cysteine 50. Glycine 187 to isoleucine 192 provides a ligand contact to NADP(+).

This sequence belongs to the glutamyl-tRNA reductase family. In terms of assembly, homodimer.

The enzyme catalyses (S)-4-amino-5-oxopentanoate + tRNA(Glu) + NADP(+) = L-glutamyl-tRNA(Glu) + NADPH + H(+). It functions in the pathway porphyrin-containing compound metabolism; protoporphyrin-IX biosynthesis; 5-aminolevulinate from L-glutamyl-tRNA(Glu): step 1/2. Functionally, catalyzes the NADPH-dependent reduction of glutamyl-tRNA(Glu) to glutamate 1-semialdehyde (GSA). The polypeptide is Glutamyl-tRNA reductase (Pseudomonas putida (strain ATCC 700007 / DSM 6899 / JCM 31910 / BCRC 17059 / LMG 24140 / F1)).